We begin with the raw amino-acid sequence, 601 residues long: Keratin, type II cytoskeletal 5 (601 aa).

The head stretch occupies residues 1 to 168; it reads MSRQSTVSFR…DPTIQRVRTE (168 aa). Phosphoserine occurs at positions 5, 8, 16, and 21. Residue Thr24 is modified to Phosphothreonine; by CDK1. A phosphoserine mark is found at Ser26, Ser36, Ser50, Ser64, Ser71, and Ser75. Thr152 carries the post-translational modification Phosphothreonine; by CDK1. Phosphothreonine; by AURKB is present on Thr167. The interval 169-204 is coil 1A; it reads EREQIKTLNNKFASFIDKVRFLEQQNKVLDTKWALL. The IF rod domain occupies 169–482; the sequence is EREQIKTLNN…KLLEGEECRL (314 aa). The linker 1 stretch occupies residues 205–223; the sequence is QEQGTKTVRQNLEPLLEQY. Residues 224–316 form a coil 1B region; sequence INNLRRQLDG…FFDAELSQMQ (93 aa). The segment at 317-339 is linker 12; it reads THVSDTSVVLSMDNNRSLDLDSI. The coil 2 stretch occupies residues 340–478; sequence IAEVKAQYED…ATYRKLLEGE (139 aa). Residues 479–601 form a tail region; it reads ECRLSGEGVG…TSSSRKSFKS (123 aa). Positions 576 to 601 are disordered; that stretch reads FGSGGGSSSSVKFVSTTSSSRKSFKS. Low complexity predominate over residues 583–601; sequence SSSVKFVSTTSSSRKSFKS.

It belongs to the intermediate filament family. Heterodimer of a type I and a type II keratin. Heterodimer with type I keratin KRT25 leading to the formation of keratin intermediate filament (KIF) network. Forms a heterodimer (via 2B domains) with KRT14 (via 2B domains). Interacts with TCHP. Interacts with EPPK1. Interacts with AMELX. Interacts with PKP1 (via N-terminus) and PKP2. In terms of processing, phosphorylated by CDK1, AURKB and Rho-kinase, phosphorylation is regulated by the cell cycle. Thr-24 phosphorylation, mediated by CDK1, peaks during prometaphase or metaphase cells with phosphorylated filamentous structures evident throughout the cytoplasm early mitosis. CDK1 phosphorylates Thr-24 in mitotic cells at the site of injury. O-glycosylated.

The protein localises to the cytoplasm. Its function is as follows. Required for the formation of keratin intermediate filaments in the basal epidermis and maintenance of the skin barrier in response to mechanical stress. Regulates the recruitment of Langerhans cells to the epidermis, potentially by modulation of the abundance of macrophage chemotactic cytokines, macrophage inflammatory cytokines and CTNND1 localization in keratinocytes. The chain is Keratin, type II cytoskeletal 5 from Bos taurus (Bovine).